We begin with the raw amino-acid sequence, 1007 residues long: Integrator complex subunit 8 (1007 aa).

The short motif at 19-24 (WFEFLL) is the WFEF motif element. Residues 56–78 (TAQESVGTPGSDLQNLNQTPSNS) are compositionally biased toward polar residues. A disordered region spans residues 56-112 (TAQESVGTPGSDLQNLNQTPSNSGPIPGVVGGAPAPTTPTASGGVGMPHSPQRPAEK). Residues 79–97 (GPIPGVVGGAPAPTTPTAS) are compositionally biased toward low complexity.

Belongs to the Integrator subunit 8 family. As to quaternary structure, belongs to the multiprotein complex Integrator, at least composed of IntS1, IntS2, IntS3, IntS4, omd/IntS5, IntS6, defl/IntS7, IntS8, IntS9, IntS10, IntS11, IntS12, asun/IntS13, IntS14 and IntS15. The core complex associates with protein phosphatase 2A subunits mts/PP2A and Pp2A-29B, to form the Integrator-PP2A (INTAC) complex.

It localises to the nucleus. It is found in the chromosome. In terms of biological role, component of the integrator complex, a multiprotein complex that terminates RNA polymerase II (Pol II) transcription in the promoter-proximal region of genes. The integrator complex provides a quality checkpoint during transcription elongation by driving premature transcription termination of transcripts that are unfavorably configured for transcriptional elongation: the complex terminates transcription by (1) catalyzing dephosphorylation of the C-terminal domain (CTD) of Pol II subunit Polr2A/Rbp1 and Spt5, and (2) degrading the exiting nascent RNA transcript via endonuclease activity. The integrator complex is also involved in the 3'-end processing of the U7 snRNA, and also the spliceosomal snRNAs U1, U2, U4 and U5. Within the integrator complex, INTS8 is required for the recruitment of protein phosphatase 2A (PP2A) to transcription pause-release checkpoint. The protein is Integrator complex subunit 8 of Drosophila melanogaster (Fruit fly).